Reading from the N-terminus, the 790-residue chain is Penicillin-binding protein 1A (790 aa).

Residues 1–6 are Cytoplasmic-facing; sequence MYKSLF. The helical; Signal-anchor for type II membrane protein transmembrane segment at 7-27 threads the bilayer; sequence FCLKIFAVLILVGCGITAYII. Residues 28-790 are Periplasmic-facing; sequence YHYSRDLPDY…SKEDQSQEIY (763 aa). The tract at residues 49 to 220 is transglycosylase; that stretch reads TRIYSHDGKL…SELNPERNYA (172 aa). Residue Glu87 is the Proton donor; for transglycosylase activity of the active site. Residues 398–711 form a transpeptidase region; the sequence is DVIVVEPIKD…SNVVLPIFID (314 aa). Residue Ser457 is the Acyl-ester intermediate; for transpeptidase activity of the active site.

It in the N-terminal section; belongs to the glycosyltransferase 51 family. The protein in the C-terminal section; belongs to the transpeptidase family.

The protein resides in the cell inner membrane. It carries out the reaction [GlcNAc-(1-&gt;4)-Mur2Ac(oyl-L-Ala-gamma-D-Glu-L-Lys-D-Ala-D-Ala)](n)-di-trans,octa-cis-undecaprenyl diphosphate + beta-D-GlcNAc-(1-&gt;4)-Mur2Ac(oyl-L-Ala-gamma-D-Glu-L-Lys-D-Ala-D-Ala)-di-trans,octa-cis-undecaprenyl diphosphate = [GlcNAc-(1-&gt;4)-Mur2Ac(oyl-L-Ala-gamma-D-Glu-L-Lys-D-Ala-D-Ala)](n+1)-di-trans,octa-cis-undecaprenyl diphosphate + di-trans,octa-cis-undecaprenyl diphosphate + H(+). It catalyses the reaction Preferential cleavage: (Ac)2-L-Lys-D-Ala-|-D-Ala. Also transpeptidation of peptidyl-alanyl moieties that are N-acyl substituents of D-alanine.. Its pathway is cell wall biogenesis; peptidoglycan biosynthesis. Its function is as follows. Cell wall formation. Synthesis of cross-linked peptidoglycan from the lipid intermediates. The enzyme has a penicillin-insensitive transglycosylase N-terminal domain (formation of linear glycan strands) and a penicillin-sensitive transpeptidase C-terminal domain (cross-linking of the peptide subunits). The sequence is that of Penicillin-binding protein 1A (mrcA) from Rickettsia felis (strain ATCC VR-1525 / URRWXCal2) (Rickettsia azadi).